A 135-amino-acid polypeptide reads, in one-letter code: Small ribosomal subunit protein uS11 (135 aa).

A compositionally biased stretch (low complexity) spans 1–11 (MPPKARAGAAV). Residues 1 to 22 (MPPKARAGAAVKKVRRKERKNV) are disordered.

This sequence belongs to the universal ribosomal protein uS11 family. In terms of assembly, part of the 30S ribosomal subunit. Interacts with proteins S7 and S18. Binds to IF-3.

Functionally, located on the platform of the 30S subunit, it bridges several disparate RNA helices of the 16S rRNA. Forms part of the Shine-Dalgarno cleft in the 70S ribosome. The polypeptide is Small ribosomal subunit protein uS11 (Salinispora tropica (strain ATCC BAA-916 / DSM 44818 / JCM 13857 / NBRC 105044 / CNB-440)).